Reading from the N-terminus, the 150-residue chain is Seminal ribonuclease (150 aa).

A signal peptide spans 1–26 (MALKSLVVLPLLVLVLLLVRVQPSLG). Positions 33 and 36 each coordinate substrate. Residue His38 is the Proton acceptor of the active site. Intrachain disulfides connect Cys52-Cys110, Cys66-Cys121, Cys84-Cys136, and Cys91-Cys98. Substrate-binding positions include 67-71 (KPVNT) and Lys92. Asn93 is modified (deamidated asparagine; by deterioration). Position 111 (Arg111) interacts with substrate. Residue His145 is the Proton donor of the active site.

This sequence belongs to the pancreatic ribonuclease family. As to quaternary structure, homodimer; disulfide-linked. Seminal plasma. Can reach 3% of the protein content of this fluid.

The protein resides in the secreted. It carries out the reaction an [RNA] containing cytidine + H2O = an [RNA]-3'-cytidine-3'-phosphate + a 5'-hydroxy-ribonucleotide-3'-[RNA].. The catalysed reaction is an [RNA] containing uridine + H2O = an [RNA]-3'-uridine-3'-phosphate + a 5'-hydroxy-ribonucleotide-3'-[RNA].. Allosteric regulation by both substrate and reaction products. Its function is as follows. This enzyme hydrolyzes both single- and double-stranded RNA. This Bos taurus (Bovine) protein is Seminal ribonuclease (SRN).